A 222-amino-acid chain; its full sequence is Ribonuclease 3 (222 aa).

Positions 5–127 (PIKLEKKLKL…LIGAIYLDKG (123 aa)) constitute an RNase III domain. Residue glutamate 41 participates in Mg(2+) binding. The active site involves aspartate 45. Residues aspartate 113 and glutamate 116 each coordinate Mg(2+). The active site involves glutamate 116. Residues 152–221 (DAKTKLQEYS…ASLCLQDIFK (70 aa)) enclose the DRBM domain.

Belongs to the ribonuclease III family. Homodimer. Requires Mg(2+) as cofactor.

The protein resides in the cytoplasm. The enzyme catalyses Endonucleolytic cleavage to 5'-phosphomonoester.. In terms of biological role, digests double-stranded RNA. Involved in the processing of primary rRNA transcript to yield the immediate precursors to the large and small rRNAs (23S and 16S). Processes some mRNAs, and tRNAs when they are encoded in the rRNA operon. Processes pre-crRNA and tracrRNA of type II CRISPR loci if present in the organism. This is Ribonuclease 3 from Pelagibacter ubique (strain HTCC1062).